The chain runs to 682 residues: Zinc finger protein 16 (682 aa).

The segment covering 1–10 (MPSLRTRREE) has biased composition (basic and acidic residues). The tract at residues 1–38 (MPSLRTRREEAEMELSAPGPSPWTPAAQARVSDAPAVT) is disordered. Positions 62 to 210 (YQQPDCDTRT…GVPTAESPLI (149 aa)) are necessary for transcription activation. The C2H2-type 1; degenerate zinc-finger motif lies at 209 to 231 (LICNECGKTFRGNPDLIQRQIVH). A C2H2-type 2; degenerate zinc finger spans residues 237 to 259 (FMCDDCGKTFSQNSVLKNRHRSH). Lysine 253 is covalently cross-linked (Glycyl lysine isopeptide (Lys-Gly) (interchain with G-Cter in SUMO2)). 8 C2H2-type zinc fingers span residues 265–287 (YQCS…QSHH), 293–315 (YTCT…QKSH), 321–343 (YECN…QRIH), 349–371 (YVCS…HRTH), 377–399 (FECG…QRVH), 405–427 (YECN…HRVH), 433–455 (YKCS…RRIH), and 461–483 (HVCN…QIIH). 2 required for nuclear localization regions span residues 268-393 (SECG…AHLR) and 341-373 (RIHS…THTG). The required for nuclear localization stretch occupies residues 473–503 (SSVLRKHQIIHTGEKPYRCSVCGKAFSHSSA). An N6-acetyllysine modification is found at lysine 487. 7 C2H2-type zinc fingers span residues 489–511 (YRCS…QGVH), 517–539 (YACH…QRVH), 545–567 (YECT…QRIH), 573–595 (HECN…QKVH), 601–623 (YTCV…QIIH), 629–651 (YKCS…QRIH), and 657–679 (YDCA…QLIH).

This sequence belongs to the krueppel C2H2-type zinc-finger protein family. Interacts with INCA1; the interaction inhibits INCA1 activity and induces the cell cycle process.

The protein resides in the nucleus. Acts as a transcriptional activator. Promotes cell proliferation by facilitating the cell cycle phase transition from the S to G2/M phase. Involved in both the hemin- and phorbol myristate acetate (PMA)-induced erythroid and megakaryocytic differentiation, respectively. Also plays a role as an inhibitor of cell apoptosis. The polypeptide is Zinc finger protein 16 (ZNF16) (Pan troglodytes (Chimpanzee)).